The sequence spans 154 residues: Myoglobin (154 aa).

One can recognise a Globin domain in the interval 2–148; sequence GLSDGEWELV…FRNDIAAKYK (147 aa). Ser-4 is subject to Phosphoserine. A Phosphothreonine modification is found at Thr-68. Residue His-94 coordinates heme b.

Belongs to the globin family. In terms of assembly, monomeric.

It is found in the cytoplasm. It localises to the sarcoplasm. The enzyme catalyses Fe(III)-heme b-[protein] + nitric oxide + H2O = Fe(II)-heme b-[protein] + nitrite + 2 H(+). The catalysed reaction is H2O2 + AH2 = A + 2 H2O. Its function is as follows. Monomeric heme protein which primary function is to store oxygen and facilitate its diffusion within muscle tissues. Reversibly binds oxygen through a pentacoordinated heme iron and enables its timely and efficient release as needed during periods of heightened demand. Depending on the oxidative conditions of tissues and cells, and in addition to its ability to bind oxygen, it also has a nitrite reductase activity whereby it regulates the production of bioactive nitric oxide. Under stress conditions, like hypoxia and anoxia, it also protects cells against reactive oxygen species thanks to its pseudoperoxidase activity. This chain is Myoglobin (MB), found in Loxodonta africana (African elephant).